The chain runs to 325 residues: Beta-1,3-galactosyltransferase brn (325 aa).

The Cytoplasmic portion of the chain corresponds to 1–7 (MQSKHRK). A helical; Signal-anchor for type II membrane protein transmembrane segment spans residues 8–28 (LLLRCLLVLPLILLVDYCGLL). Residues 29-325 (THLHELNFER…WNECRSANYA (297 aa)) lie on the Lumenal side of the membrane. Residues Asn149 and Asn166 are each glycosylated (N-linked (GlcNAc...) asparagine).

Belongs to the glycosyltransferase 31 family.

The protein resides in the golgi apparatus membrane. The catalysed reaction is a ganglioside GM2 (d18:1(4E)) + UDP-alpha-D-galactose = a ganglioside GM1 (d18:1(4E)) + UDP + H(+). In terms of biological role, neurogenic protein essential for the development and maintenance of epithelial structure. Required in the germline for establishing the follicular epithelium and for determining the dorsal-ventral polarity. Collaborates with Notch on the apical surface of follicle cells to mediate germline-follicle cell adhesion. Brn has a role in chorion formation. The chain is Beta-1,3-galactosyltransferase brn (brn) from Drosophila melanogaster (Fruit fly).